Consider the following 545-residue polypeptide: Mesoderm induction early response protein 2 (545 aa).

At S11 the chain carries Phosphoserine. The segment at 100–189 (DPISDRESEG…SSDTEEDSLP (90 aa)) is disordered. Positions 140–153 (QSSADDLTPSVTSH) are enriched in polar residues. The region spanning 195–292 (KEIMVGPQFQ…EALRRLRFNV (98 aa)) is the ELM2 domain. Residues 297–349 (DGLCAWSEEECRNFEHGFRVHGKNFHLIQANKVRTRSVGECVEYYYLWKKSER) enclose the SANT domain. Positions 364–464 (YVPSGTTDAD…YQPAVTAPEP (101 aa)) are disordered.

In terms of assembly, part of a complex containing at least CDYL, MIER1, MIER2, HDAC1 and HDAC2.

It localises to the nucleus. Its function is as follows. Transcriptional repressor. The sequence is that of Mesoderm induction early response protein 2 (MIER2) from Homo sapiens (Human).